A 380-amino-acid chain; its full sequence is MAPNLRKSHPLLKMINNSLIDLPTPSNISAWWNFGSLLGICLATQILTGLLLAAHYTADTTLAFSSVAHTCRNVQYGWLIRNLHANGASFFFICIYLHIGRGLYYGSYLYKETWNTGVILLLTLMATAFVGYVLPWGQMSFWGATVITNLFSAVPYIGQTLVEWAWGGFSVDNPTLTRFFTLHFLLPFMIMGLTLIHLTFLHESGSNNPLGIVSNCDKIPFHPYFSLKDTLGFMFMLLPLMTLALFSPNLLGDPENFTPANPLVTPPHIKPEWYFLFAYAILRSIPNKLGGVLALAASVLILFLAPLLHKSKQRTMTFRPLFQLLFWTLTANLLILTWVGSQPVEHPFIIIGQLASLTYFTILLILFPIIGALENKMLNY.

A run of 4 helical transmembrane segments spans residues 34–54, 78–99, 114–134, and 179–199; these read FGSL…LLAA, WLIR…YLHI, WNTG…GYVL, and FFTL…IHLT. Residues H84 and H98 each coordinate heme b. Heme b-binding residues include H183 and H197. H202 is a binding site for a ubiquinone. Transmembrane regions (helical) follow at residues 227-247, 289-309, 321-341, and 348-368; these read LKDT…ALFS, LGGV…PLLH, LFQL…WVGS, and FIII…ILFP.

This sequence belongs to the cytochrome b family. As to quaternary structure, the cytochrome bc1 complex contains 11 subunits: 3 respiratory subunits (MT-CYB, CYC1 and UQCRFS1), 2 core proteins (UQCRC1 and UQCRC2) and 6 low-molecular weight proteins (UQCRH/QCR6, UQCRB/QCR7, UQCRQ/QCR8, UQCR10/QCR9, UQCR11/QCR10 and a cleavage product of UQCRFS1). This cytochrome bc1 complex then forms a dimer. It depends on heme b as a cofactor.

The protein resides in the mitochondrion inner membrane. Functionally, component of the ubiquinol-cytochrome c reductase complex (complex III or cytochrome b-c1 complex) that is part of the mitochondrial respiratory chain. The b-c1 complex mediates electron transfer from ubiquinol to cytochrome c. Contributes to the generation of a proton gradient across the mitochondrial membrane that is then used for ATP synthesis. The polypeptide is Cytochrome b (MT-CYB) (Grus nigricollis (Black-necked crane)).